The sequence spans 367 residues: Protein trichome birefringence-like 39 (367 aa).

Residues Gly7 to Asn29 form a helical; Signal-anchor for type II membrane protein membrane-spanning segment. The GDS motif motif lies at Gly120–Ser122. Positions Asp343–Asn357 match the DCXHWCLPGXXDXWN motif motif.

The protein belongs to the PC-esterase family. TBL subfamily.

The protein localises to the membrane. Its function is as follows. May act as a bridging protein that binds pectin and other cell wall polysaccharides. Probably involved in maintaining esterification of pectins. May be involved in the specific O-acetylation of cell wall polymers. The polypeptide is Protein trichome birefringence-like 39 (TBL39) (Arabidopsis thaliana (Mouse-ear cress)).